The primary structure comprises 96 residues: Integration host factor subunit beta (96 aa).

Belongs to the bacterial histone-like protein family. Heterodimer of an alpha and a beta chain.

In terms of biological role, this protein is one of the two subunits of integration host factor, a specific DNA-binding protein that functions in genetic recombination as well as in transcriptional and translational control. The polypeptide is Integration host factor subunit beta (Photobacterium profundum (strain SS9)).